We begin with the raw amino-acid sequence, 123 residues long: Small ribosomal subunit protein bS16 (123 aa).

This sequence belongs to the bacterial ribosomal protein bS16 family.

In Treponema pallidum (strain Nichols), this protein is Small ribosomal subunit protein bS16.